The chain runs to 193 residues: dTTP/UTP pyrophosphatase (193 aa).

Asp-77 (proton acceptor) is an active-site residue.

This sequence belongs to the Maf family. YhdE subfamily. Requires a divalent metal cation as cofactor.

The protein localises to the cytoplasm. The catalysed reaction is dTTP + H2O = dTMP + diphosphate + H(+). It catalyses the reaction UTP + H2O = UMP + diphosphate + H(+). Its function is as follows. Nucleoside triphosphate pyrophosphatase that hydrolyzes dTTP and UTP. May have a dual role in cell division arrest and in preventing the incorporation of modified nucleotides into cellular nucleic acids. The sequence is that of dTTP/UTP pyrophosphatase from Bacteroides fragilis (strain YCH46).